The primary structure comprises 412 residues: NADH-ubiquinone oxidoreductase 49 kDa subunit (412 aa).

Belongs to the complex I 49 kDa subunit family.

Its subcellular location is the hydrogenosome. It carries out the reaction a ubiquinone + NADH + 5 H(+)(in) = a ubiquinol + NAD(+) + 4 H(+)(out). Transfer of electrons from NADH to the respiratory chain. The immediate electron acceptor for the enzyme is believed to be ubiquinone. Component of the iron-sulfur (IP) fragment of the enzyme. The sequence is that of NADH-ubiquinone oxidoreductase 49 kDa subunit (nad7) from Nyctotherus ovalis.